Here is an 875-residue protein sequence, read N- to C-terminus: MIGCGACEPEVKMAGGQAAAALPTWKMAARRSLSARGRGVLQAAAGRLLPLLLLSCCWGAGGCTAAGENEETVIIGLRLEDTNDVSFMEGGALRVSERTRVKLRVYGQNINNETWSRIAFTEHERRRHTPSERGLGGPAPPEPDSGPQRCGIRTSDIIILPHIILNRRTSGIIEIEIKPLRKMEKSKSYYLCTSLSTPALGAGGSGSASGTVGGKGGAGVAGLPPPPWAETTWIYHDGEDTKMIVGEEKKFLLPFWLQVIFISLLLCLSGMFSGLNLGLMALDPMELRIVQNCGTEKEKNYAKRIEPVRRQGNYLLCSLLLGNVLVNTTLTILLDDIAGSGLVAVVVSTIGIVIFGEIVPQAICSRHGLAVGANTIFLTKFFMMMTFPASYPVSKLLDCVLGQEIGTVYNREKLLEMLRVTDPYNDLVKEELNIIQGALELRTKTVEDVMTPLRDCFMITGEAILDFNTMSEIMESGYTRIPVFEGERSNIVDLLFVKDLAFVDPDDCTPLKTITKFYNHPLHFVFNDTKLDAMLEEFKKGKSHLAIVQRVNNEGEGDPFYEVLGIVTLEDVIEEIIKSEILDETDLYTDNRTKKKVAHRERKQDFSAFKQTDSEMKVKISPQLLLAMHRFLATEVEAFSPSQMSEKILLRLLKHPNVIQELKYDEKNKKAPECYLYQRNKPVDYFVLILQGKVEVEAGKEGMKFEASAFSYYGVMALTASPVPLSLSRTFVVSRTEVLAAGSPGENKSPPRPCGLNHSDSLSRSDRIDAMTPTLGSSNNQLSSSFLQVYIPDYSVRALSDLQFVKISRQQYQNALMASRMDKTPQSSDSENTKIELTLTELHDGLPDETANLLNEQNCVSHNKANHSLHSEGAI.

The Extracellular portion of the chain corresponds to 1 to 250; that stretch reads MIGCGACEPE…TKMIVGEEKK (250 aa). Residue asparagine 112 is glycosylated (N-linked (GlcNAc...) asparagine). Positions 121 to 149 are disordered; sequence TEHERRRHTPSERGLGGPAPPEPDSGPQR. A helical transmembrane segment spans residues 251–271; that stretch reads FLLPFWLQVIFISLLLCLSGM. The region spanning 251-431 is the CNNM transmembrane domain; it reads FLLPFWLQVI…DPYNDLVKEE (181 aa). Topologically, residues 272-313 are cytoplasmic; that stretch reads FSGLNLGLMALDPMELRIVQNCGTEKEKNYAKRIEPVRRQGN. The helical intramembrane region spans 314–334; sequence YLLCSLLLGNVLVNTTLTILL. Residues 335 to 338 lie on the Cytoplasmic side of the membrane; it reads DDIA. The chain crosses the membrane as a helical span at residues 339 to 359; sequence GSGLVAVVVSTIGIVIFGEIV. At 360–368 the chain is on the extracellular side; the sequence is PQAICSRHG. The helical transmembrane segment at 369-389 threads the bilayer; that stretch reads LAVGANTIFLTKFFMMMTFPA. Residues 390–875 lie on the Cytoplasmic side of the membrane; sequence SYPVSKLLDC…NHSLHSEGAI (486 aa). 2 consecutive CBS domains span residues 450–511 and 518–584; these read MTPL…CTPL and YNHP…ILDE. The interval 741–763 is disordered; it reads AGSPGENKSPPRPCGLNHSDSLS. The residue at position 761 (serine 761) is a Phosphoserine.

It belongs to the ACDP family. As to quaternary structure, isoform 1 and isoform 2 may interact with each other. In terms of processing, the N-terminus is cleaved within the endoplasmic reticulum. The signal peptidase complex seems to be involved in the processing, but the exact cleavage site has not been identified. As to expression, widely expressed, with highest levels in kidney, lung, spleen and testis. In the kidney, predominantly expressed in the distal convoluted tubule and, at lower levels, in the connecting tubule (at protein level).

Its subcellular location is the cell membrane. Functionally, divalent metal cation transporter. Mediates transport of divalent metal cations in an order of Mg(2+) &gt; Co(2+) &gt; Mn(2+) &gt; Sr(2+) &gt; Ba(2+) &gt; Cu(2+) &gt; Fe(2+). The sequence is that of Metal transporter CNNM2 (Cnnm2) from Mus musculus (Mouse).